We begin with the raw amino-acid sequence, 929 residues long: Collagen alpha-1(XII) chain (929 aa).

The 49-residue stretch at 1–49 (DVEIFAVGVKDAVRSELEAIATPPTATHVYTVEDFDAFQRISFELTQSI) folds into the VWFA 1 domain. 6 Fibronectin type-III domains span residues 67–156 (PPRD…LEVR), 158–250 (APRN…VGEP), 251–340 (KNLR…LQER), 342–432 (SPRD…ASPD), 434–521 (KIVK…LSPF), and 523–613 (APRS…TLRD). Asn98 carries an N-linked (GlcNAc...) asparagine glycan. O-linked (Xyl...) (chondroitin sulfate) serine glycans are attached at residues Ser231, Ser324, and Ser415. Residues 633–805 (DIVLLVDGSW…SLLTNIVNDL (173 aa)) form the VWFA 2 domain. Positions 821–910 (PPSNLVTSEP…AGTETTLPIP (90 aa)) constitute a Fibronectin type-III 7 domain.

Belongs to the fibril-associated collagens with interrupted helices (FACIT) family. Trimer of identical chains each containing 190 kDa of non-triple-helical sequences. Post-translationally, the triple-helical tail is stabilized by disulfide bonds at each end. Prolines at the third position of the tripeptide repeating unit (G-X-Y) are hydroxylated in some or all of the chains.

The protein localises to the secreted. Its subcellular location is the extracellular space. The protein resides in the extracellular matrix. Its function is as follows. Type XII collagen interacts with type I collagen-containing fibrils, the COL1 domain could be associated with the surface of the fibrils, and the COL2 and NC3 domains may be localized in the perifibrillar matrix. Could play a developmental role in regeneration. The polypeptide is Collagen alpha-1(XII) chain (Notophthalmus viridescens (Eastern newt)).